We begin with the raw amino-acid sequence, 400 residues long: CCA-adding enzyme (400 aa).

Residues glycine 28 and arginine 31 each contribute to the ATP site. Residues glycine 28 and arginine 31 each contribute to the CTP site. Mg(2+) contacts are provided by aspartate 41 and aspartate 43. The ATP site is built by arginine 112, aspartate 155, arginine 158, arginine 161, and arginine 164. Residues arginine 112, aspartate 155, arginine 158, arginine 161, and arginine 164 each contribute to the CTP site.

It belongs to the tRNA nucleotidyltransferase/poly(A) polymerase family. Bacterial CCA-adding enzyme type 3 subfamily. As to quaternary structure, homodimer. The cofactor is Mg(2+).

It carries out the reaction a tRNA precursor + 2 CTP + ATP = a tRNA with a 3' CCA end + 3 diphosphate. The enzyme catalyses a tRNA with a 3' CCA end + 2 CTP + ATP = a tRNA with a 3' CCACCA end + 3 diphosphate. In terms of biological role, catalyzes the addition and repair of the essential 3'-terminal CCA sequence in tRNAs without using a nucleic acid template. Adds these three nucleotides in the order of C, C, and A to the tRNA nucleotide-73, using CTP and ATP as substrates and producing inorganic pyrophosphate. tRNA 3'-terminal CCA addition is required both for tRNA processing and repair. Also involved in tRNA surveillance by mediating tandem CCA addition to generate a CCACCA at the 3' terminus of unstable tRNAs. While stable tRNAs receive only 3'-terminal CCA, unstable tRNAs are marked with CCACCA and rapidly degraded. This is CCA-adding enzyme from Staphylococcus aureus (strain COL).